Here is a 312-residue protein sequence, read N- to C-terminus: Ribosomal protein L11 methyltransferase (312 aa).

Thr162, Gly183, Asp205, and Asn248 together coordinate S-adenosyl-L-methionine.

It belongs to the methyltransferase superfamily. PrmA family.

The protein resides in the cytoplasm. It catalyses the reaction L-lysyl-[protein] + 3 S-adenosyl-L-methionine = N(6),N(6),N(6)-trimethyl-L-lysyl-[protein] + 3 S-adenosyl-L-homocysteine + 3 H(+). Functionally, methylates ribosomal protein L11. The chain is Ribosomal protein L11 methyltransferase from Bacillus cereus (strain G9842).